We begin with the raw amino-acid sequence, 283 residues long: NFU1 iron-sulfur cluster scaffold homolog, mitochondrial (283 aa).

The N-terminal 65 residues, 1–65 (MSKFLSQAAI…ELRMPVACRR (65 aa)), are a transit peptide targeting the mitochondrion. Residues 182–250 (IKELLDTRIR…IPEVESVEQV (69 aa)) form a nifU region. Residues cysteine 219 and cysteine 222 each coordinate [4Fe-4S] cluster.

Belongs to the NifU family.

The protein localises to the mitochondrion. In terms of biological role, molecular scaffold for [Fe-S] cluster assembly of mitochondrial iron-sulfur proteins. In Drosophila simulans (Fruit fly), this protein is NFU1 iron-sulfur cluster scaffold homolog, mitochondrial.